The chain runs to 125 residues: Sulfiredoxin, chloroplastic/mitochondrial (125 aa).

The N-terminal 22 residues, 1–22 (MANLMMRLPISLRSFSVSASSS), are a transit peptide targeting the chloroplast and mitochondrion.

The protein belongs to the sulfiredoxin family. Low expression in photosynthetic tissues such as leaves and sepals.

The protein resides in the plastid. The protein localises to the chloroplast. It is found in the mitochondrion. The enzyme catalyses S-hydroxy-S-oxy-L-cysteinyl-[peroxiredoxin] + [protein]-dithiol + ATP = S-hydroxy-L-cysteinyl-[peroxiredoxin] + [protein]-disulfide + ADP + phosphate. Functionally, contributes to oxidative stress resistance by reducing cysteine-sulfinic acid formed under exposure to oxidants in a peroxiredoxin. May catalyze the reduction in a multi-step process by acting both as a specific phosphotransferase and a thioltransferase. Required to switch on the antioxidant pathway to regenerate the oxidative damage. In mitochondrion, catalyzes the retroreduction of the inactive sulfinic form of atypical Prx IIF using thioredoxin as reducing agent. This is Sulfiredoxin, chloroplastic/mitochondrial (SRX) from Arabidopsis thaliana (Mouse-ear cress).